The primary structure comprises 254 residues: 5'-methylthioadenosine/S-adenosylhomocysteine nucleosidase (254 aa).

Methionine 1 is modified (N-acetylmethionine). Glutamate 25 functions as the Proton acceptor in the catalytic mechanism. S-methyl-5'-thioadenosine is bound by residues threonine 103 and 186–189 (KDME). Adenine-binding residues include lysine 186 and aspartate 212. The active-site Proton donor is the aspartate 212.

This sequence belongs to the PNP/UDP phosphorylase family. MtnN subfamily. In terms of assembly, homodimer.

It carries out the reaction S-methyl-5'-thioadenosine + H2O = 5-(methylsulfanyl)-D-ribose + adenine. The enzyme catalyses S-adenosyl-L-homocysteine + H2O = S-(5-deoxy-D-ribos-5-yl)-L-homocysteine + adenine. It catalyses the reaction 5'-deoxyadenosine + H2O = 5-deoxy-D-ribose + adenine. It functions in the pathway amino-acid biosynthesis; L-methionine biosynthesis via salvage pathway; S-methyl-5-thio-alpha-D-ribose 1-phosphate from S-methyl-5'-thioadenosine (hydrolase route): step 1/2. In terms of biological role, enzyme of the methionine cycle that catalyzes the irreversible cleavage of the glycosidic bond in 5'-methylthioadenosine (MTA) and S-adenosylhomocysteine (SAH/AdoHcy) to a lesser extent, to adenine and the corresponding thioribose, 5'-methylthioribose and S-ribosylhomocysteine, respectively. Contributes to the maintenance of AdoMet homeostasis and is required to sustain high rates of ethylene synthesis. The chain is 5'-methylthioadenosine/S-adenosylhomocysteine nucleosidase (MTN2) from Arabidopsis thaliana (Mouse-ear cress).